A 231-amino-acid chain; its full sequence is Large ribosomal subunit protein uL1 (231 aa).

The protein belongs to the universal ribosomal protein uL1 family. Part of the 50S ribosomal subunit.

In terms of biological role, binds directly to 23S rRNA. The L1 stalk is quite mobile in the ribosome, and is involved in E site tRNA release. Functionally, protein L1 is also a translational repressor protein, it controls the translation of the L11 operon by binding to its mRNA. In Legionella pneumophila (strain Paris), this protein is Large ribosomal subunit protein uL1.